The sequence spans 320 residues: E3 ubiquitin-protein ligase RZF1 (320 aa).

Ser-2 is modified (N-acetylserine). Residues 186-227 (CPVCKDEFELKSEAKQMPCHHIYHSDCIVPWLVQHNSCPVCR) form an RING-type; atypical zinc finger. Residues 229-320 (ELPSRGSSSS…MGYSGWPFDY (92 aa)) form a disordered region. Composition is skewed to low complexity over residues 232-249 (SRGSSSSTQSSQNRSTNG) and 295-308 (QQQQQHQHQHQQQQ).

As to expression, expressed in seedlings and in flowers.

The enzyme catalyses S-ubiquitinyl-[E2 ubiquitin-conjugating enzyme]-L-cysteine + [acceptor protein]-L-lysine = [E2 ubiquitin-conjugating enzyme]-L-cysteine + N(6)-ubiquitinyl-[acceptor protein]-L-lysine.. E3 ubiquitin-protein ligase that promotes osmotic stress and abscisic acid (ABA) responses. Negatively regulates drought-mediated control of early seedling development, probably by influencing proline content, water loss, membrane ion leakage and the expression of dehydration stress-related genes (e.g. RAB18, RD29A, RD29B, AOX1A, ERD15, ERD1, COR15A, P5CS1 and P5CR). Modulates bZIP11 accumulation during rehydration following drought. The polypeptide is E3 ubiquitin-protein ligase RZF1 (Arabidopsis thaliana (Mouse-ear cress)).